The chain runs to 134 residues: Protein Turandot E (134 aa).

Residues 1 to 38 (MSNTRTVHSSTSISKMNSALQISCLLVVLGCLLGSGHC) form the signal peptide.

It belongs to the Turandot family.

It localises to the secreted. Functionally, a humoral factor that may play a role in stress tolerance. The chain is Protein Turandot E from Drosophila melanogaster (Fruit fly).